Reading from the N-terminus, the 621-residue chain is Chaperone protein HtpG (621 aa).

The a; substrate-binding stretch occupies residues 1 to 341; it reads MSNQEYTFQT…SEDLPLNVSR (341 aa). Residues 342 to 547 form a b region; sequence EILQQNKILA…GDEPNAMMAN (206 aa). The tract at residues 548–621 is c; the sequence is WMRQMGQSVP…RLNSVLLKAL (74 aa).

The protein belongs to the heat shock protein 90 family. In terms of assembly, homodimer.

Its subcellular location is the cytoplasm. Its function is as follows. Molecular chaperone. Has ATPase activity. This is Chaperone protein HtpG from Helicobacter pylori (strain J99 / ATCC 700824) (Campylobacter pylori J99).